The sequence spans 542 residues: GMP synthase [glutamine-hydrolyzing] (542 aa).

The 191-residue stretch at 28-218 folds into the Glutamine amidotransferase type-1 domain; it reads IIVILDFGSQ…VYHICHCEPT (191 aa). The active-site Nucleophile is C105. Catalysis depends on residues H192 and E194. The GMPS ATP-PPase domain occupies 219–417; that stretch reads WTTAAFIEES…IGLPEEIVRR (199 aa). Residue 246 to 252 coordinates ATP; it reads SGGVDSS.

Homodimer.

The catalysed reaction is XMP + L-glutamine + ATP + H2O = GMP + L-glutamate + AMP + diphosphate + 2 H(+). Its pathway is purine metabolism; GMP biosynthesis; GMP from XMP (L-Gln route): step 1/1. Functionally, catalyzes the synthesis of GMP from XMP. This chain is GMP synthase [glutamine-hydrolyzing] (guaA), found in Synechocystis sp. (strain ATCC 27184 / PCC 6803 / Kazusa).